The sequence spans 397 residues: RNA binding protein fox-1 homolog 1 (397 aa).

Residues 1-121 are disordered; that stretch reads MNCEREQLRG…NKSQPKRLHV (121 aa). The span at 70–87 shows a compositional bias: polar residues; that stretch reads QTHSEQSPADTSAQTVSG. Positions 88-99 are enriched in low complexity; the sequence is TATQTDDAAPTD. Residues 100 to 113 show a composition bias toward polar residues; it reads GQPQTQPSENTENK. Positions 117–193 constitute an RRM domain; the sequence is KRLHVSNIPF…RKIEVNNATA (77 aa). Asymmetric dimethylarginine is present on Arg-317. Position 388 is an omega-N-methylarginine (Arg-388).

As to quaternary structure, binds to the C-terminus of ATXN2. Predominantly expressed in muscle and brain.

The protein localises to the nucleus. It is found in the cytoplasm. Functionally, RNA-binding protein that regulates alternative splicing events by binding to 5'-UGCAUGU-3' elements. Regulates alternative splicing of tissue-specific exons and of differentially spliced exons during erythropoiesis. The protein is RNA binding protein fox-1 homolog 1 (RBFOX1) of Homo sapiens (Human).